The following is a 154-amino-acid chain: Cysteine-rich DPF motif domain-containing protein 1 (154 aa).

Belongs to the CDPF1 family.

The polypeptide is Cysteine-rich DPF motif domain-containing protein 1 (Drosophila melanogaster (Fruit fly)).